The sequence spans 150 residues: Aspartate 1-decarboxylase (150 aa).

Residue serine 24 is the Schiff-base intermediate with substrate; via pyruvic acid of the active site. Serine 24 bears the Pyruvic acid (Ser) mark. Threonine 56 contributes to the substrate binding site. Catalysis depends on tyrosine 57, which acts as the Proton donor. Residue glycine 72–alanine 74 coordinates substrate.

Belongs to the PanD family. Heterooctamer of four alpha and four beta subunits. Pyruvate is required as a cofactor. Is synthesized initially as an inactive proenzyme, which is activated by self-cleavage at a specific serine bond to produce a beta-subunit with a hydroxyl group at its C-terminus and an alpha-subunit with a pyruvoyl group at its N-terminus.

The protein localises to the cytoplasm. The enzyme catalyses L-aspartate + H(+) = beta-alanine + CO2. It functions in the pathway cofactor biosynthesis; (R)-pantothenate biosynthesis; beta-alanine from L-aspartate: step 1/1. Functionally, catalyzes the pyruvoyl-dependent decarboxylation of aspartate to produce beta-alanine. The sequence is that of Aspartate 1-decarboxylase from Beijerinckia indica subsp. indica (strain ATCC 9039 / DSM 1715 / NCIMB 8712).